The chain runs to 147 residues: Hemoglobin subunit beta (147 aa).

Val2 is modified (N-acetylvaline). Residues 3-147 (NLSGDEKNAV…VANALAHRYH (145 aa)) enclose the Globin domain. Ser45 carries the phosphoserine modification. Lys60 is subject to N6-acetyllysine. Heme b is bound at residue His64. Lys83 is modified (N6-acetyllysine). His93 contacts heme b. Cys94 is modified (S-nitrosocysteine).

It belongs to the globin family. As to quaternary structure, heterotetramer of two alpha chains and two beta chains. In terms of tissue distribution, red blood cells.

Involved in oxygen transport from the lung to the various peripheral tissues. This chain is Hemoglobin subunit beta (HBB), found in Vicugna pacos (Alpaca).